We begin with the raw amino-acid sequence, 323 residues long: Down-regulator of invasive growth 2 (323 aa).

A compositionally biased stretch (acidic residues) spans 1–10 (MNKEEQEDPQ). Residues 1–26 (MNKEEQEDPQQEQISTVQENDPRNLQ) are disordered. Residues 11–26 (QEQISTVQENDPRNLQ) are compositionally biased toward polar residues. Ser-34 is modified (phosphoserine). The tract at residues 67–87 (LSQKEEDHSGKPPTITTSPAE) is disordered. Residues Ser-225, Ser-266, and Ser-270 each carry the phosphoserine modification.

Forms a complex with DIG1, STE12 and either FUS3 or KSS1. The interaction of FUS3 with STE12 depends on the presence of both DIG1 and DIG2. STE12 is lost from FUS3/DIG1/DIG2 complex after pheromone treatment. DIG1 and DIG2 have also been reported to interact with CLN1 and CLN2. Phosphorylated by FUS3 and KSS1, in a pheromone-stimulated manner.

The protein localises to the nucleus. Functionally, DIG2 and DIG1 are negative regulators of the filamentation and pheromone induced mating program. DIG1 and DIG2 inhibit the transcriptional activity of STE12 by direct protein-protein interaction. DIG2 binds to the DNA binding domain (DBD) of STE12 and thus inhibits transcription when overexpressed. The chain is Down-regulator of invasive growth 2 (DIG2) from Saccharomyces cerevisiae (strain ATCC 204508 / S288c) (Baker's yeast).